A 110-amino-acid chain; its full sequence is Integration host factor subunit alpha (110 aa).

It belongs to the bacterial histone-like protein family. In terms of assembly, heterodimer of an alpha and a beta chain.

Functionally, this protein is one of the two subunits of integration host factor, a specific DNA-binding protein that functions in genetic recombination as well as in transcriptional and translational control. The sequence is that of Integration host factor subunit alpha from Methylococcus capsulatus (strain ATCC 33009 / NCIMB 11132 / Bath).